The following is a 514-amino-acid chain: Endoglucanase MaCel5A (514 aa).

A signal peptide spans 1-23; that stretch reads MKRILFTAGGCLFYLLLAVKAYA. 2 stretches are compositionally biased toward low complexity: residues 91–114 and 179–201; these read GSSSSSSSSSSSSSGSSSSSSGSG and SSSSSSGGTSSSGSSSSGVSSSG. Disordered regions lie at residues 91-118 and 179-208; these read GSSSSSSSSSSSSSGSSSSSSGSGSSSG and SSSSSSGGTSSSGSSSSGVSSSGGSSGGDS. Glu-346 (proton donor) is an active-site residue. The active-site Nucleophile is the Glu-439.

This sequence belongs to the glycosyl hydrolase 5 (cellulase A) family.

It carries out the reaction Endohydrolysis of (1-&gt;4)-beta-D-glucosidic linkages in cellulose, lichenin and cereal beta-D-glucans.. With respect to regulation, exhibits strong halostability and halotolerance. The activity increases about tenfold in the presence of 0.5 M NaCl, and about fivefold in the presence of 4.0 M NaCl. Tolerates detergents, but activity is decreased in the presence of EDTA. Activity is enhanced in the presence of Mn(2+), Ca(2+), Ba(2+) or Mg(2+), and decreased in the presence of Zn(2+), Cu(2+), Al(3+) or Fe(3+). In terms of biological role, endoglucanase that exhibits highest activity toward barley beta-glucan, lower activity toward carboxymethyl cellulose (CMC-Na), and marginal activity toward laminarin and xylan. The protein is Endoglucanase MaCel5A of Microbulbifer sp. (strain ALW1).